Consider the following 229-residue polypeptide: Ribosomal RNA small subunit methyltransferase G (229 aa).

S-adenosyl-L-methionine is bound by residues Gly-71, 122–123, and Arg-139; that span reads AE.

Belongs to the methyltransferase superfamily. RNA methyltransferase RsmG family.

The protein localises to the cytoplasm. In terms of biological role, specifically methylates the N7 position of a guanine in 16S rRNA. The chain is Ribosomal RNA small subunit methyltransferase G from Thermotoga neapolitana (strain ATCC 49049 / DSM 4359 / NBRC 107923 / NS-E).